The chain runs to 144 residues: HMG1/2-like protein (144 aa).

Disordered stretches follow at residues 1 to 42 and 85 to 144; these read MKGG…PPSA and PFIS…EDDD. Composition is skewed to basic and acidic residues over residues 8–35 and 89–99; these read AKSD…DPNK and KAEKRKQEYEK. Positions 36 to 105 form a DNA-binding region, HMG box; it reads PKRPPSAFFV…EYEKNLQAYN (70 aa). Residues 126–144 are compositionally biased toward acidic residues; the sequence is NDDDEDQDGSGEDDSEDDD.

It belongs to the HMGB family. Expressed at higher levels in dark-grown tissues, such as roots; and at lower levels in light-grown tissues, such as cotyledons and stems.

The protein resides in the nucleus. This is HMG1/2-like protein from Ipomoea nil (Japanese morning glory).